The primary structure comprises 249 residues: DNA repair protein RecO (249 aa).

It belongs to the RecO family.

In terms of biological role, involved in DNA repair and RecF pathway recombination. The protein is DNA repair protein RecO of Mycoplasma capricolum subsp. capricolum (strain California kid / ATCC 27343 / NCTC 10154).